The following is a 197-amino-acid chain: UPF0314 protein R03235 (197 aa).

The next 2 membrane-spanning stretches (helical) occupy residues 16–36 and 152–172; these read ALWL…QHLM and LPVA…GYMV.

It belongs to the UPF0314 family.

It is found in the cell membrane. In Rhizobium meliloti (strain 1021) (Ensifer meliloti), this protein is UPF0314 protein R03235.